The sequence spans 544 residues: U1 small nuclear ribonucleoprotein component PRP42 (544 aa).

HAT repeat units follow at residues 7–39 (LIHD…YIVK), 51–83 (QLLK…LEYK), 85–118 (GNVS…FCNN), 121–156 (SHQK…QISS), and 163–195 (KYWN…DIMD). The Nuclear localization signal motif lies at 230-235 (KKKLKK). HAT repeat units lie at residues 255–288 (FESK…YTIT), 290–322 (QTDS…WLIN), 366–397 (NLLE…FKTF), and 456–488 (VEKN…LIYF).

In terms of assembly, component of the 18S U1 snRNP particle, a subcomplex of the spliceosome.

It localises to the nucleus. Functionally, essential component of the U1 snRNP particle, which recognizes and binds the 5'-splice site of pre-mRNA. Together with other non-snRNP factors, U1 snRNP forms the spliceosomal commitment complex, that targets pre-mRNA to the splicing pathway. U1 snRNP is cotranscriptionally recruited to intron-containing genes. Required for U1 snRNP biogenesis. The chain is U1 small nuclear ribonucleoprotein component PRP42 (PRP42) from Saccharomyces cerevisiae (strain ATCC 204508 / S288c) (Baker's yeast).